We begin with the raw amino-acid sequence, 116 residues long: Large ribosomal subunit protein uL24 (116 aa).

The protein belongs to the universal ribosomal protein uL24 family. In terms of assembly, part of the 50S ribosomal subunit.

Functionally, one of two assembly initiator proteins, it binds directly to the 5'-end of the 23S rRNA, where it nucleates assembly of the 50S subunit. Located at the polypeptide exit tunnel on the outside of the subunit. The chain is Large ribosomal subunit protein uL24 from Methanosarcina barkeri (strain Fusaro / DSM 804).